Consider the following 162-residue polypeptide: Early E1A 18 kDa protein (162 aa).

Residues 134–162 (EEPTEGVAENSLKRQADSSLCSSSPKRFC) are disordered. A compositionally biased stretch (polar residues) spans 150-162 (DSSLCSSSPKRFC).

This Tree shrew adenovirus serotype 1 (TSAdV-1) protein is Early E1A 18 kDa protein.